We begin with the raw amino-acid sequence, 626 residues long: Elongation factor 4 (626 aa).

Residues 14–195 (SLIRNFCIIA…RIVVDVPAPT (182 aa)) form the tr-type G domain. GTP-binding positions include 26–31 (DHGKST) and 142–145 (NKID). The disordered stretch occupies residues 603 to 626 (LSTGEGGNDRDTKDKIRAAQKSEG). Basic and acidic residues predominate over residues 609–626 (GNDRDTKDKIRAAQKSEG).

It belongs to the TRAFAC class translation factor GTPase superfamily. Classic translation factor GTPase family. LepA subfamily.

It localises to the cell membrane. It catalyses the reaction GTP + H2O = GDP + phosphate + H(+). Its function is as follows. Required for accurate and efficient protein synthesis under certain stress conditions. May act as a fidelity factor of the translation reaction, by catalyzing a one-codon backward translocation of tRNAs on improperly translocated ribosomes. Back-translocation proceeds from a post-translocation (POST) complex to a pre-translocation (PRE) complex, thus giving elongation factor G a second chance to translocate the tRNAs correctly. Binds to ribosomes in a GTP-dependent manner. The protein is Elongation factor 4 of Bifidobacterium animalis subsp. lactis (strain AD011).